The primary structure comprises 355 residues: Hyaluronan and proteoglycan link protein 1 (355 aa).

A propeptide spanning residues 1 to 9 (MTSLLFLVL) is cleaved from the precursor. N-linked (GlcNAc...) asparagine glycosylation is found at asparagine 21 and asparagine 56. Positions 38-156 (PRLLVVAEQA…EDDTAVVALN (119 aa)) constitute an Ig-like V-type domain. Disulfide bonds link cysteine 61–cysteine 140, cysteine 182–cysteine 253, cysteine 206–cysteine 227, cysteine 280–cysteine 350, and cysteine 305–cysteine 326. 2 consecutive Link domains span residues 160–255 (VVFP…FCFT) and 260–352 (GRFY…YCFR).

It belongs to the HAPLN family.

It localises to the secreted. The protein resides in the extracellular space. It is found in the extracellular matrix. In terms of biological role, stabilizes the aggregates of proteoglycan monomers with hyaluronic acid in the extracellular cartilage matrix. The chain is Hyaluronan and proteoglycan link protein 1 (HAPLN1) from Gallus gallus (Chicken).